The sequence spans 274 residues: Large ribosomal subunit protein uL2 (274 aa).

2 disordered regions span residues 28–55 (APHA…RHVG) and 224–274 (VAMN…RRRK).

It belongs to the universal ribosomal protein uL2 family. Part of the 50S ribosomal subunit. Forms a bridge to the 30S subunit in the 70S ribosome.

In terms of biological role, one of the primary rRNA binding proteins. Required for association of the 30S and 50S subunits to form the 70S ribosome, for tRNA binding and peptide bond formation. It has been suggested to have peptidyltransferase activity; this is somewhat controversial. Makes several contacts with the 16S rRNA in the 70S ribosome. The chain is Large ribosomal subunit protein uL2 from Pseudomonas putida (strain GB-1).